The primary structure comprises 129 residues: Follitropin subunit beta (129 aa).

A signal peptide spans 1–20; it reads MKSVQFCFLFCCWRAICCRS. Disulfide bonds link C21-C69, C35-C84, C38-C122, C46-C100, C50-C102, and C105-C112. N-linked (GlcNAc...) asparagine glycosylation is found at N25 and N42.

This sequence belongs to the glycoprotein hormones subunit beta family. Heterodimer. The active follitropin is a heterodimer composed of an alpha chain/CGA shared with other hormones and a unique beta chain/FSHB shown here.

The protein localises to the secreted. Together with the alpha chain CGA constitutes follitropin, the follicle-stimulating hormone, and provides its biological specificity to the hormone heterodimer. Binds FSHR, a G protein-coupled receptor, on target cells to activate downstream signaling pathways. Follitropin is involved in follicle development and spermatogenesis in reproductive organs. The chain is Follitropin subunit beta (FSHB) from Bos taurus (Bovine).